The sequence spans 75 residues: Small ribosomal subunit protein bS18 (75 aa).

The protein belongs to the bacterial ribosomal protein bS18 family. As to quaternary structure, part of the 30S ribosomal subunit. Forms a tight heterodimer with protein bS6.

Functionally, binds as a heterodimer with protein bS6 to the central domain of the 16S rRNA, where it helps stabilize the platform of the 30S subunit. The chain is Small ribosomal subunit protein bS18 from Pectobacterium atrosepticum (strain SCRI 1043 / ATCC BAA-672) (Erwinia carotovora subsp. atroseptica).